The sequence spans 207 residues: DNA protection during starvation protein 1 (207 aa).

A compositionally biased stretch (basic and acidic residues) spans 1 to 12 (MTKKSTKSEAAS). The tract at residues 1-31 (MTKKSTKSEAASKTKKSGVPETGAQGVRAGG) is disordered. Fe cation contacts are provided by His-83, Asp-110, and Glu-114.

This sequence belongs to the Dps family. The 12 subunits form a hollow sphere into which the mineral iron core of up to 500 Fe(3+) can be deposited. The homododecameric forms at higher concentration of salt, the homodimeric form under reducing, low-salt conditions. The assembly of the dodecamer is irreversible.

The protein resides in the cytoplasm. The protein localises to the nucleoid. It carries out the reaction 2 Fe(2+) + H2O2 + 2 H(+) = 2 Fe(3+) + 2 H2O. Protects DNA from oxidative damage by sequestering intracellular Fe(2+) ion and storing it in the form of Fe(3+) oxyhydroxide mineral. One hydrogen peroxide oxidizes two Fe(2+) ions, which prevents hydroxyl radical production by the Fenton reaction. Both oligomeric forms of dps exhibit ferroxidase activity and DNA binding. Dodecameric dps is capable of Fe(2+) oxidation/mineralization. Only dimeric dps affords efficient DNA protection against hydroxyl radical-mediated cleavage. In Deinococcus radiodurans (strain ATCC 13939 / DSM 20539 / JCM 16871 / CCUG 27074 / LMG 4051 / NBRC 15346 / NCIMB 9279 / VKM B-1422 / R1), this protein is DNA protection during starvation protein 1 (dps1).